A 500-amino-acid chain; its full sequence is Carnosic acid synthase (500 aa).

The chain crosses the membrane as a helical span at residues 4 to 24; that stretch reads LILLSLAFLASCVVAYSRRRP. Cys443 contacts heme.

The protein belongs to the cytochrome P450 family. It depends on heme as a cofactor. In terms of tissue distribution, expressed in leaf glandular trichomes.

It localises to the membrane. The catalysed reaction is 11-hydroxyferruginol + 3 reduced [NADPH--hemoprotein reductase] + 3 O2 = carnosate + 3 oxidized [NADPH--hemoprotein reductase] + 4 H2O + 4 H(+). It catalyses the reaction miltiradiene + 2 reduced [NADPH--hemoprotein reductase] + 2 O2 = miltiradien-20-al + 2 oxidized [NADPH--hemoprotein reductase] + 3 H2O + 2 H(+). It carries out the reaction ferruginol + 3 reduced [NADPH--hemoprotein reductase] + 3 O2 = pisiferate + 3 oxidized [NADPH--hemoprotein reductase] + 4 H2O + 4 H(+). It participates in secondary metabolite biosynthesis; terpenoid biosynthesis. Monooxygenase involved in the biosynthesis of carnosate, a potent antioxidant labdane-related diterpene natural product. Catalyzes the oxidation of 11-hydroxyferruginol to produce carnosate. Mediates the conversion of miltiradien into miltiradien-20-al. Also involved in the production of pisiferic acid and derivative products from ferruginol. The polypeptide is Carnosic acid synthase (Salvia pomifera (Apple sage)).